The following is a 190-amino-acid chain: Ribosome maturation factor RimP (190 aa).

Residues 159 to 190 (ELELAGGIPEGRVAPADADASEDEEVVEGLDK) are disordered. The segment covering 177–190 (DASEDEEVVEGLDK) has biased composition (acidic residues).

This sequence belongs to the RimP family.

Its subcellular location is the cytoplasm. Functionally, required for maturation of 30S ribosomal subunits. The protein is Ribosome maturation factor RimP of Rhodococcus opacus (strain B4).